A 417-amino-acid polypeptide reads, in one-letter code: NADH-quinone oxidoreductase subunit D 1 (417 aa).

Belongs to the complex I 49 kDa subunit family. NDH-1 is composed of 14 different subunits. Subunits NuoB, C, D, E, F, and G constitute the peripheral sector of the complex.

The protein resides in the cell membrane. The catalysed reaction is a quinone + NADH + 5 H(+)(in) = a quinol + NAD(+) + 4 H(+)(out). Functionally, NDH-1 shuttles electrons from NADH, via FMN and iron-sulfur (Fe-S) centers, to quinones in the respiratory chain. The immediate electron acceptor for the enzyme in this species is believed to be ubiquinone. Couples the redox reaction to proton translocation (for every two electrons transferred, four hydrogen ions are translocated across the cytoplasmic membrane), and thus conserves the redox energy in a proton gradient. The chain is NADH-quinone oxidoreductase subunit D 1 from Roseiflexus castenholzii (strain DSM 13941 / HLO8).